The following is a 494-amino-acid chain: tRNA (guanine(37)-N(1))-methyltransferase (494 aa).

The N-terminal 32 residues, 1-32, are a transit peptide targeting the mitochondrion; that stretch reads MRIRRILYFYGNLPNTYTANVLRRLAFSCWHT. S-adenosyl-L-methionine-binding positions include His-278, 316 to 317, 344 to 345, and Asn-377; these read DL and DG. Residues 468–494 form a disordered region; that stretch reads DTGEPESKRPRTAEAFPLPHVQQSRNS.

The protein belongs to the class I-like SAM-binding methyltransferase superfamily. TRM5/TYW2 family. As to quaternary structure, monomer.

The protein resides in the mitochondrion matrix. It is found in the nucleus. Its subcellular location is the cytoplasm. It catalyses the reaction guanosine(37) in tRNA + S-adenosyl-L-methionine = N(1)-methylguanosine(37) in tRNA + S-adenosyl-L-homocysteine + H(+). Functionally, involved in mitochondrial tRNA methylation. Specifically methylates the N1 position of guanosine-37 in various tRNAs. Methylation is not dependent on the nature of the nucleoside 5' of the target nucleoside. This is the first step in the biosynthesis of wybutosine (yW), a modified base adjacent to the anticodon of tRNAs and required for accurate decoding. This Xenopus tropicalis (Western clawed frog) protein is tRNA (guanine(37)-N(1))-methyltransferase (trmt5).